The following is a 742-amino-acid chain: ATP-dependent RNA helicase DBP7 (742 aa).

Residues G45–T100 are disordered. A Q motif motif is present at residues D143–K172. Positions I178–I372 constitute a Helicase ATP-binding domain. ATP is bound at residue A191 to T198. The DEGD box signature appears at D307 to D310. A Helicase C-terminal domain is found at T405–N605. The segment at A701 to F726 is disordered. Residues G710 to K722 show a composition bias toward basic and acidic residues.

The protein belongs to the DEAD box helicase family. DDX31/DBP7 subfamily.

Its subcellular location is the nucleus. It is found in the nucleolus. The catalysed reaction is ATP + H2O = ADP + phosphate + H(+). Its function is as follows. ATP-binding RNA helicase involved in the biogenesis of 60S ribosomal subunits and is required for the normal formation of 25S and 5.8S rRNAs. The sequence is that of ATP-dependent RNA helicase DBP7 (DBP7) from Saccharomyces cerevisiae (strain ATCC 204508 / S288c) (Baker's yeast).